Consider the following 180-residue polypeptide: O-acetyl-ADP-ribose deacetylase (180 aa).

Residues 1 to 175 (MKPQIDVIHG…LYQRLLTQRG (175 aa)) enclose the Macro domain. Substrate-binding positions include 11–12 (DI), Asn25, 33–35 (GVD), and 122–126 (STGVY). Residue Asp35 is the Proton acceptor of the active site.

This sequence belongs to the MacroD-type family. YmdB subfamily. In terms of assembly, homodimer. Interacts with RNase III.

The enzyme catalyses 3''-O-acetyl-ADP-D-ribose + H2O = ADP-D-ribose + acetate + H(+). The catalysed reaction is 2''-O-acetyl-ADP-D-ribose + H2O = ADP-D-ribose + acetate + H(+). Functionally, deacetylates O-acetyl-ADP ribose to yield ADP-ribose and free acetate. Down-regulates ribonuclease 3 (RNase III) activity. Acts by interacting directly with the region of the ribonuclease that is required for dimerization/activation. The polypeptide is O-acetyl-ADP-ribose deacetylase (Enterobacter cloacae subsp. cloacae (strain ATCC 13047 / DSM 30054 / NBRC 13535 / NCTC 10005 / WDCM 00083 / NCDC 279-56)).